A 176-amino-acid polypeptide reads, in one-letter code: Epididymal-specific lipocalin-9 (176 aa).

The first 15 residues, 1-15 (MALLLLSLGLSLIAA), serve as a signal peptide directing secretion. N-linked (GlcNAc...) asparagine glycosylation is found at asparagine 68 and asparagine 129. A disulfide bridge connects residues cysteine 83 and cysteine 161.

It belongs to the calycin superfamily. Lipocalin family.

Its subcellular location is the secreted. The protein is Epididymal-specific lipocalin-9 of Homo sapiens (Human).